A 640-amino-acid chain; its full sequence is Threonine--tRNA ligase (640 aa).

The interval D224–P525 is catalytic. The Zn(2+) site is built by C323, H374, and H502.

Belongs to the class-II aminoacyl-tRNA synthetase family. As to quaternary structure, homodimer. Requires Zn(2+) as cofactor.

The protein localises to the cytoplasm. It carries out the reaction tRNA(Thr) + L-threonine + ATP = L-threonyl-tRNA(Thr) + AMP + diphosphate + H(+). Catalyzes the attachment of threonine to tRNA(Thr) in a two-step reaction: L-threonine is first activated by ATP to form Thr-AMP and then transferred to the acceptor end of tRNA(Thr). Also edits incorrectly charged L-seryl-tRNA(Thr). In Tropheryma whipplei (strain Twist) (Whipple's bacillus), this protein is Threonine--tRNA ligase.